The primary structure comprises 96 residues: Antitoxin ParD4 (96 aa).

This sequence belongs to the ParD antitoxin family.

Antitoxin component of a type II toxin-antitoxin (TA) system. Neutralizes the effect of cognate toxin ParE4, but no other RelE or ParE toxin. The sequence is that of Antitoxin ParD4 (parD4) from Caulobacter vibrioides (strain ATCC 19089 / CIP 103742 / CB 15) (Caulobacter crescentus).